Reading from the N-terminus, the 112-residue chain is MAEIQFSKGVAETVVPEVRLSKSKNGQSGMAKFYFLEPTILAKESTDDITGMYLIDDEGEIITREVKGKFINGRPTAIEATVILNSQPEWDRFMRFMERYGAENGLGFSKSE.

Belongs to the Psb28 family. Part of the photosystem II complex.

It is found in the cellular thylakoid membrane. The chain is Photosystem II reaction center Psb28 protein from Synechocystis sp. (strain ATCC 27184 / PCC 6803 / Kazusa).